A 2448-amino-acid polypeptide reads, in one-letter code: MKIFIKDKTSTNLLNIFALYFSAICFIYCQNSCQPQNLKTDTNSQSLNLSSSTQMFMLYGWVSSTQQTSYNIYKIKDSVNDPVLSLDFNYSNQILTISGKNIQNIYQQNSLWFFFLTQIDQNGQQLTVYFSQPQIQRDYYNKFNLASQLTLQSSGQITLSISAANYKNLQFINGANFASSGYQNAQSFMFQDFQGYLYSFKLDQVYERSLLKEDVQQRMYPIYPTIDGQLNSATYSKAYQGIQLINQNITLSNGQFMRYYSTFQIQNVILTDPFFLGFYFRLTNLTQDDNNIFYIVSEGLQNPESISFVMIQNSLKIKMIDKQYLLYSNNLFTNQWYYLSLTWASIQVDSTQKFQSQIMVSIRQQYSQSAYKQLVQLAYPLSVQSTTYSIYFGYVPSQYNSQSTNYGIYGYISKILIGQGGSLISNTDEFKNTCKIQNQCDVLFLGSQGTSCQVCSSGYLNLSSMDSNTCIYTTCPSGYYFSNEFMQCQQCNQACLTCFSAGNDSCPQCLNGYYQYQQTCFKKCPDGFYISDQANFKCEKCNASCLSCTGPSFDQCLSCKSGFYLSSNTCQPCSQTCSQCTDMSTCQSCINGYYLDSNNSCISSCPNGQFANVQNQCQNCSIPNCYLCSSLTSCTQCNDKFYLSNNQCQSCDPTCTKCFGPTNQQCFACIQNKYLYNSACLSQSDCTALVGYFPNFQTSVCQACQGKCKTCTSSNTCSSCINGYYLQDSNCLPCPPQCSSCQSSTVCTSCYQNYYLDGNNNCSLTCPDGTFGNSQNICQTCIDGCQTCYGPTLLECYSCEQGFFFQAFQITNNSQAIQKGMCIACSQFCLSCTSRYYCTACKPLRFMKILPNLNQQLCVDDCGSYYLSDETDYTCKSCQSGCQTCSITVSNCQTCIQGYYNSGGRVCNQCLSKCLQCSQIGICTSCASGFYLQNNSCQNACLSGFPDSSQNVCVACHPTCVTCQGPLATDCLTCISGYYLNPANNICQICDPGCYSCSSKTNCSQCNNNYFLYSNYCYLACPSRTYPTQVNGISVCLPCTDPACLQCSNLQCITCMAGYFINQGACQVCDSSCNTCMNSPKICTSCDQTKKLVLSNTQCVSQCASNQYVDSVQNRCLPCFYSCSSCFGPNSNQCFSCQPNGFYLTNQTQCSICDISCLQCSGPGFDSCIQCAQGYYKLGDSVCVQSCPDGFFLNTSNNQCQSCNQVCFNCNGPQNSDCTSCAAGYYQSISNQNGIICSQCNSKCLTCNGPFSSNCILCNSGYVKYNSQCQTFCPQGYRSIKGVCIQCPSNCGYCVNQSLNSNSQVCTQCLQNYILNQLDNTCVQVCPNGTFQVFIASNQQAPDISSYYCQSCDQGCLSCSQSSSNCTQCKTGYIFHETVNQCVYGGTCLNGFILYIDSQTQNQYCKVCKINCVSCIQQFFYYQENCYSSCPVGTVQVSQSNICVLNLLPQLTILTNPAQVTFKEDVTIVTQIQSPIQITSMVWSLISPSPTSDLGSKFLQNLILNNITNLYIPLSNISPLSLYQIQFTIANSKGSATQTISLNTQLMLTPGTVNCQPSSNIFSGTTQIQLTLLNFIHPSPLFYDYILSPISNTYSFQRINNMTATNQDLLSLDNFFVVFITTNSKQLNLTTYQVRQQQSINVVVNVFNQYVFYQTSSQVQFLKGSAFTYNTTDINSDLTKFDTLVASMIANTNQLTQLSTFIQDIRTLKEVLYNYLQNAYSQSQQQIYLQKSFFQVINSDISCSLNLCMNSGKCVPNSIFCSCPSAFTGPKCQIDVKRSQQLSQYLEGALSLIYQNMASNISNDGLVNILMDISFFRDMLDKAIYPVYFQILSKYFSQKLTTVITNNGNVSFLSSKTLSYCFIQIFENLNPIIINYNSTQLPDKSTFLQLLTNIKDLSIITIITSQNSPLNVASPYYFYASIGVITSSMFPQILDQYQNYYNTSNSASFSSSLLMRNLQLQEQTSQQTDPSQNNVNVGQEFGTGIDLLKSLFNFPVIEYQSNRHFIYLPQSTITSFSNLRIVVAEIFDIASALPYSSQLLSQQFLLATGFFTVIISQSQQIIPIINNPNPITIIIPKMVSYPSLNYVDPKLPVYNCLHYDQNKDQFETNSCFFQRENSTHIACSCYTIKSYITVQINKQNIQSLPVYNDIILSNNFTFDSYVTEKLRVYKEVNKFTDANTTFSVEQEKFQELMILKNYYGLYIMIIISLGIGAAFLGYSAIKSKYLDEKINMKDHSRIYFLYYFPIISFLVGPTNQFVNNYTRAVTSLTIIASHFAFSSIYVQILPFDMQSSTQQILTSIITVSSTSVCIYWTIGVYHMIVVGLNNNLNEEKNTGSTWKIVEGFKYSFGVTMIGLVLAVLALISISVFIGLCDDDQFNIWQDIIKAVFLIDLIADAIVVFILIIVGYDSTIGSFFALRGYGITIQSDNKVKHQKLDKEVKLDEKKNTK.

Residues Thr9 to Cys29 form a helical membrane-spanning segment. 9 N-linked (GlcNAc...) asparagine glycosylation sites follow: Asn48, Asn89, Asn248, Asn284, Asn461, Asn503, Asn542, Asn598, and Asn619. 4 FU repeats span residues Lys431–Phe481, Phe485–Ile530, Asn535–Ser566, and Ser567–Ala611. 10 FU repeats span residues Asn645–Pro694, Thr698–Gln727, Asp728–Gly772, Gln775–Asn813, Lys819–Ser868, Gly904–Asp947, Gln950–Ala983, Asn984–Pro1027, Gln1063–Val1109, and Gln1113–Leu1144. N-linked (GlcNAc...) asparagine glycans are attached at residues Asn761 and Asn812. Asn934 carries N-linked (GlcNAc...) asparagine glycosylation. Asn1002 carries N-linked (GlcNAc...) asparagine glycosylation. A glycan (N-linked (GlcNAc...) asparagine) is linked at Asn1146. One copy of the FU 15 repeat lies at Gln1147–Leu1193. Asn1194 is a glycosylation site (N-linked (GlcNAc...) asparagine). FU repeat units lie at residues Asn1197–Gln1232, Gly1234–Ser1279, Lys1281–Gln1332, Ser1346–Leu1394, and Asn1402–Gln1436. 3 N-linked (GlcNAc...) asparagine glycosylation sites follow: Asn1296, Asn1328, and Asn1365. 4 N-linked (GlcNAc...) asparagine glycosylation sites follow: Asn1506, Asn1601, Asn1628, and Asn1670. Residues Ser1739–Gln1773 form the EGF-like domain. Cystine bridges form between Cys1743-Cys1754, Cys1748-Cys1761, and Cys1763-Cys1772. Residues Asn1800, Asn1849, Asn1877, Asn1942, Asn2117, Asn2155, and Asn2179 are each glycosylated (N-linked (GlcNAc...) asparagine). The next 2 helical transmembrane spans lie at Leu2201–Ile2221 and Ile2238–Val2258. An N-linked (GlcNAc...) asparagine glycan is attached at Asn2260. The next 4 membrane-spanning stretches (helical) occupy residues Ser2267–Phe2287, Ile2296–Val2316, Met2352–Cys2372, and Ala2386–Gly2406.

Its subcellular location is the membrane. Required for mucocyst secretion. This chain is Cysteine repeat modular protein 1, found in Tetrahymena thermophila (strain SB210).